The chain runs to 282 residues: Bifunctional protein FolD (282 aa).

NADP(+) is bound by residues 166–168 and serine 191; that span reads GRS.

This sequence belongs to the tetrahydrofolate dehydrogenase/cyclohydrolase family. In terms of assembly, homodimer.

It carries out the reaction (6R)-5,10-methylene-5,6,7,8-tetrahydrofolate + NADP(+) = (6R)-5,10-methenyltetrahydrofolate + NADPH. The catalysed reaction is (6R)-5,10-methenyltetrahydrofolate + H2O = (6R)-10-formyltetrahydrofolate + H(+). Its pathway is one-carbon metabolism; tetrahydrofolate interconversion. In terms of biological role, catalyzes the oxidation of 5,10-methylenetetrahydrofolate to 5,10-methenyltetrahydrofolate and then the hydrolysis of 5,10-methenyltetrahydrofolate to 10-formyltetrahydrofolate. The chain is Bifunctional protein FolD from Acidovorax sp. (strain JS42).